A 365-amino-acid chain; its full sequence is Aspartate-semialdehyde dehydrogenase (365 aa).

Positions 13, 14, 15, 16, 38, 41, 85, and 86 each coordinate NADP(+). Position 13 is a phosphothreonine (Thr13). Cys156 acts as the Acyl-thioester intermediate in catalysis. Gly188 serves as a coordination point for NADP(+). His256 functions as the Proton acceptor in the catalytic mechanism. Residues Ser318 and Ser323 each carry the phosphoserine modification. Asn343 contributes to the NADP(+) binding site.

Belongs to the aspartate-semialdehyde dehydrogenase family. In terms of assembly, homotetramer.

The protein localises to the cytoplasm. It localises to the cytosol. The protein resides in the nucleus. It carries out the reaction L-aspartate 4-semialdehyde + phosphate + NADP(+) = 4-phospho-L-aspartate + NADPH + H(+). Its pathway is amino-acid biosynthesis; L-methionine biosynthesis via de novo pathway; L-homoserine from L-aspartate: step 2/3. The protein operates within amino-acid biosynthesis; L-threonine biosynthesis; L-threonine from L-aspartate: step 2/5. Its function is as follows. Catalyzes the NADPH-dependent formation of L-aspartate 4-semialdehyde (L-ASA) by the reductive dephosphorylation of 4-phospho-L-aspartate. Mediates the second step in the biosynthesis of amino acids that derive from aspartate (the aspartate family of amino acids), including methioinine and threonine, the latter of which is a precursor to isoleucine. The polypeptide is Aspartate-semialdehyde dehydrogenase (HOM2) (Saccharomyces cerevisiae (strain ATCC 204508 / S288c) (Baker's yeast)).